Here is a 131-residue protein sequence, read N- to C-terminus: Snaclec macrovipecetin subunit alpha (131 aa).

3 cysteine pairs are disulfide-bonded: Cys-2–Cys-13, Cys-30–Cys-125, and Cys-100–Cys-117. In terms of domain architecture, C-type lectin spans 9–126; it reads HEEHCYKVFR…CEDKNPFICK (118 aa).

As to quaternary structure, heterodimer of subunits alpha and beta; disulfide-linked. Expressed by the venom gland.

It is found in the secreted. Its function is as follows. Interferes with one step of hemostasis (modulation of platelet aggregation, or coagulation cascade, for example). This chain is Snaclec macrovipecetin subunit alpha, found in Macrovipera lebetinus (Levantine viper).